The following is a 223-amino-acid chain: Glycosylphosphatidylinositol anchor biosynthesis protein 11 (223 aa).

Transmembrane regions (helical) follow at residues 25 to 45, 52 to 72, 88 to 108, 120 to 140, 158 to 178, and 189 to 209; these read LAVV…SAGI, VMTQ…VVVL, MIAA…LVLF, FVCA…TYHL, VYAA…PIPY, and ITIL…GIAL.

Belongs to the PIGF family.

It localises to the endoplasmic reticulum membrane. Its pathway is glycolipid biosynthesis; glycosylphosphatidylinositol-anchor biosynthesis. Its function is as follows. Acts in the GPI biosynthetic pathway between GlcNAc-PI synthesis and GPI transfer to protein. The polypeptide is Glycosylphosphatidylinositol anchor biosynthesis protein 11 (GPI11) (Yarrowia lipolytica (strain CLIB 122 / E 150) (Yeast)).